Consider the following 348-residue polypeptide: Phospho-2-dehydro-3-deoxyheptonate aldolase, Trp-sensitive (348 aa).

It belongs to the class-I DAHP synthase family.

The enzyme catalyses D-erythrose 4-phosphate + phosphoenolpyruvate + H2O = 7-phospho-2-dehydro-3-deoxy-D-arabino-heptonate + phosphate. The protein operates within metabolic intermediate biosynthesis; chorismate biosynthesis; chorismate from D-erythrose 4-phosphate and phosphoenolpyruvate: step 1/7. Its function is as follows. Stereospecific condensation of phosphoenolpyruvate (PEP) and D-erythrose-4-phosphate (E4P) giving rise to 3-deoxy-D-arabino-heptulosonate-7-phosphate (DAHP). The sequence is that of Phospho-2-dehydro-3-deoxyheptonate aldolase, Trp-sensitive (aroH) from Enterobacter agglomerans (Erwinia herbicola).